The sequence spans 244 residues: Isoprenyl transferase (244 aa).

The active site involves aspartate 20. Aspartate 20 lines the Mg(2+) pocket. Substrate contacts are provided by residues 21-24 (GNGR), tryptophan 25, arginine 33, histidine 37, and 65-67 (SSE). Asparagine 68 serves as the catalytic Proton acceptor. Residues tryptophan 69, arginine 71, arginine 188, and 194–196 (RIS) each bind substrate. Glutamate 207 provides a ligand contact to Mg(2+).

It belongs to the UPP synthase family. Homodimer. Mg(2+) serves as cofactor.

Functionally, catalyzes the condensation of isopentenyl diphosphate (IPP) with allylic pyrophosphates generating different type of terpenoids. This Rhodopirellula baltica (strain DSM 10527 / NCIMB 13988 / SH1) protein is Isoprenyl transferase.